The following is a 70-amino-acid chain: Large ribosomal subunit protein bL31 (70 aa).

Zn(2+)-binding residues include Cys16, Cys18, Cys37, and Cys40.

Belongs to the bacterial ribosomal protein bL31 family. Type A subfamily. In terms of assembly, part of the 50S ribosomal subunit. It depends on Zn(2+) as a cofactor.

Binds the 23S rRNA. This is Large ribosomal subunit protein bL31 from Actinobacillus pleuropneumoniae serotype 5b (strain L20).